Reading from the N-terminus, the 74-residue chain is UPF0346 protein BPUM_1890 (74 aa).

This sequence belongs to the UPF0346 family.

This Bacillus pumilus (strain SAFR-032) protein is UPF0346 protein BPUM_1890.